The primary structure comprises 198 residues: Recombination protein RecR (198 aa).

The segment at 58 to 73 adopts a C4-type zinc-finger fold; sequence CSICGNFTDSDPCAIC. Residues 81–175 form the Toprim domain; the sequence is SIICVIEEPK…KVTRIAHGIP (95 aa).

The protein belongs to the RecR family.

Its function is as follows. May play a role in DNA repair. It seems to be involved in an RecBC-independent recombinational process of DNA repair. It may act with RecF and RecO. This Clostridium kluyveri (strain NBRC 12016) protein is Recombination protein RecR.